The chain runs to 208 residues: Small ribosomal subunit protein uS4 (208 aa).

The S4 RNA-binding domain occupies 98–161 (RRLDNTIYRL…RQSPIILEAQ (64 aa)).

It belongs to the universal ribosomal protein uS4 family. In terms of assembly, part of the 30S ribosomal subunit. Contacts protein S5. The interaction surface between S4 and S5 is involved in control of translational fidelity.

Functionally, one of the primary rRNA binding proteins, it binds directly to 16S rRNA where it nucleates assembly of the body of the 30S subunit. In terms of biological role, with S5 and S12 plays an important role in translational accuracy. This Solidesulfovibrio magneticus (strain ATCC 700980 / DSM 13731 / RS-1) (Desulfovibrio magneticus) protein is Small ribosomal subunit protein uS4.